Reading from the N-terminus, the 752-residue chain is Polyribonucleotide nucleotidyltransferase (752 aa).

Positions 542 and 548 each coordinate Mg(2+). The KH domain maps to 608–667 (PRITTIQIPVSKIGELIGPKGKNINALTEETGANISIEDDGTVFISAASGEAAEAAIEKI). An S1 motif domain is found at 679–748 (GERFLGTVVK…NRGKISLVPV (70 aa)).

This sequence belongs to the polyribonucleotide nucleotidyltransferase family. Requires Mg(2+) as cofactor.

The protein localises to the cytoplasm. The enzyme catalyses RNA(n+1) + phosphate = RNA(n) + a ribonucleoside 5'-diphosphate. In terms of biological role, involved in mRNA degradation. Catalyzes the phosphorolysis of single-stranded polyribonucleotides processively in the 3'- to 5'-direction. The sequence is that of Polyribonucleotide nucleotidyltransferase from Corynebacterium efficiens (strain DSM 44549 / YS-314 / AJ 12310 / JCM 11189 / NBRC 100395).